The primary structure comprises 536 residues: MNKIVHKVAEAFRKNGVPRTKWLNPKTIYGLANQKLLGSVEAPHAQGTGLNTVPQVEHYTKACRTKQRDMVRSYLEATGSTHFARLNTPAYNKSSALEFYAKLKALQRYTEGEEVLFQMSSVEVREIISRLVKLTQEGDQIPDEQRRFPTELFMDVAPVPNFNDDPGILEQYIGILTHSAFYYHNTSKIDPIPHILRDLLHPQNEKTASLRTTTMFNDLIYYFGKKSDYASCREYYSQMKLEKKTPNIETYRLLFLNLLKNMQIPKKQLPYKEMIFYLNDMEKFGVPADAKIWAYCYHLLVESVSKKLLLEKMIQHNAPISPDFIVSILRTLDVDCKAILEFAKEYSIPFTPKLLRLCISKLCKEYKFESAWQLLTSLCRSTDVVTTGSVNILLNAAAEKGRLDLAVLTYNSMKVQLGVTPDLRTHRLIFKAMARNGYHENFQDVYHWAVWSMKRSTSGWFVHDAWSRRCESMIKQKCGSVTPPTTENMEKVAAILHRGVWDNRGLFIRCWGEYKELRHVFRLLGSIPPAYKGKTA.

PPR repeat units lie at residues 212–246 and 386–421; these read TTTM…KKTP and TTGS…GVTP.

Its subcellular location is the mitochondrion inner membrane. In terms of biological role, required for respiration. This Eremothecium gossypii (strain ATCC 10895 / CBS 109.51 / FGSC 9923 / NRRL Y-1056) (Yeast) protein is ATPase expression protein 3 (AEP3).